We begin with the raw amino-acid sequence, 373 residues long: Erythronate-4-phosphate dehydrogenase (373 aa).

Substrate-binding residues include S45 and T67. NAD(+) is bound by residues D147, 207–209 (ASR), and D233. The active site involves R209. E238 is a catalytic residue. H255 serves as the catalytic Proton donor. Residue G258 participates in NAD(+) binding.

The protein belongs to the D-isomer specific 2-hydroxyacid dehydrogenase family. PdxB subfamily. Homodimer.

The protein localises to the cytoplasm. The catalysed reaction is 4-phospho-D-erythronate + NAD(+) = (R)-3-hydroxy-2-oxo-4-phosphooxybutanoate + NADH + H(+). Its pathway is cofactor biosynthesis; pyridoxine 5'-phosphate biosynthesis; pyridoxine 5'-phosphate from D-erythrose 4-phosphate: step 2/5. Functionally, catalyzes the oxidation of erythronate-4-phosphate to 3-hydroxy-2-oxo-4-phosphonooxybutanoate. The polypeptide is Erythronate-4-phosphate dehydrogenase (Pseudoalteromonas translucida (strain TAC 125)).